Reading from the N-terminus, the 325-residue chain is Aldo-keto reductase family 1 member A1 (325 aa).

Ala2 is subject to N-acetylalanine. Residue Ser4 is modified to Phosphoserine. NADP(+)-binding positions include Gly11–Gly20, Thr21, Trp22, and Asp45. The active-site Proton donor is the Tyr50. Lys127 is modified (N6-acetyllysine; alternate). Position 127 is an N6-succinyllysine; alternate (Lys127). Lys145 is modified (N6-succinyllysine). Residues Ser162, Asn163, Ser211, Leu213, Ser215, Ser216, Lys263, Ser264, Val265, Thr266, Arg269, Gln272, and Asn273 each contribute to the NADP(+) site. Ser211 is modified (phosphoserine).

It belongs to the aldo/keto reductase family. As to quaternary structure, monomer.

Its subcellular location is the cytoplasm. The protein localises to the cytosol. It localises to the apical cell membrane. The enzyme catalyses a primary alcohol + NADP(+) = an aldehyde + NADPH + H(+). It carries out the reaction glycerol + NADP(+) = D-glyceraldehyde + NADPH + H(+). It catalyses the reaction glycerol + NADP(+) = L-glyceraldehyde + NADPH + H(+). The catalysed reaction is L-gulonate + NADP(+) = aldehydo-D-glucuronate + NADPH + H(+). The enzyme catalyses L-gulono-1,4-lactone + NADP(+) = D-glucurono-3,6-lactone + NADPH + H(+). It carries out the reaction allyl alcohol + NADP(+) = acrolein + NADPH + H(+). It catalyses the reaction hydroxyacetone + NADP(+) = methylglyoxal + NADPH + H(+). The catalysed reaction is 3-deoxyfructose + NADP(+) = 3-deoxyglucosone + NADPH + H(+). The enzyme catalyses (R)-mevalonate + NADP(+) = (R)-mevaldate + NADPH + H(+). It carries out the reaction pyridine 3-methanol + NADP(+) = pyridine-3-carbaldehyde + NADPH + H(+). It catalyses the reaction S-nitroso-CoA + NADPH + H(+) = sulfinamide-CoA + NADP(+). The catalysed reaction is S-nitrosoglutathione + NADPH + H(+) = S-(hydroxysulfenamide)glutathione + NADP(+). In terms of biological role, catalyzes the NADPH-dependent reduction of a wide variety of carbonyl-containing compounds to their corresponding alcohols. Displays enzymatic activity towards endogenous metabolites such as aromatic and aliphatic aldehydes, ketones, monosaccharides and bile acids, with a preference for negatively charged substrates, such as glucuronate and succinic semialdehyde. Plays an important role in ascorbic acid biosynthesis by catalyzing the reduction of D-glucuronic acid and D-glucurono-gamma-lactone. Functions as a detoxifiying enzyme by reducing a range of toxic aldehydes. Reduces methylglyoxal and 3-deoxyglucosone, which are present at elevated levels under hyperglycemic conditions and are cytotoxic. Involved also in the detoxification of lipid-derived aldehydes like acrolein. Plays a role in the activation of procarcinogens, such as polycyclic aromatic hydrocarbon trans-dihydrodiols, and in the metabolism of various xenobiotics and drugs. Also acts as an inhibitor of protein S-nitrosylation by mediating degradation of S-nitroso-coenzyme A (S-nitroso-CoA), a cofactor required to S-nitrosylate proteins. S-nitroso-CoA reductase activity is involved in reprogramming intermediary metabolism in renal proximal tubules, notably by inhibiting protein S-nitrosylation of isoform 2 of PKM (PKM2). Also acts as a S-nitroso-glutathione reductase by catalyzing the NADPH-dependent reduction of S-nitrosoglutathione. Displays no reductase activity towards retinoids. This Sus scrofa (Pig) protein is Aldo-keto reductase family 1 member A1 (AKR1A1).